The chain runs to 233 residues: MLISSVKVGEHFYFTLGVFKLHAQVFIVSFFVILILILFSVLGTNKMSQTPRGLQNFLEYVLEFIQDITKSQIGEPHYRDWVPFIGTLFLFIFVSNWSGALIPWKMIILPEGELSAPTNDINTTAALALLTSLAYFYAGISKKGLRYFSRYIKPTPILLPINILEDFTKPLSLSFRLFGNILADELVVSVLTLLVPLIVPLPVMMLGLFASSIQALIFATLAAAYIGEAIEEH.

Helical transmembrane passes span 82–102 (VPFI…GALI), 121–141 (INTT…AGIS), 177–199 (LFGN…PLIV), and 211–231 (SSIQ…EAIE).

The protein belongs to the ATPase A chain family. In terms of assembly, F-type ATPases have 2 components, CF(1) - the catalytic core - and CF(0) - the membrane proton channel. CF(1) has five subunits: alpha(3), beta(3), gamma(1), delta(1), epsilon(1). CF(0) has four main subunits: a, b, b' and c.

The protein localises to the plastid. It is found in the chloroplast thylakoid membrane. Key component of the proton channel; it plays a direct role in the translocation of protons across the membrane. The chain is ATP synthase subunit a, chloroplastic from Galdieria sulphuraria (Red alga).